Consider the following 123-residue polypeptide: Potassium voltage-gated channel subfamily E member 2 (123 aa).

N-linked (GlcNAc...) asparagine glycans are attached at residues Asn-6 and Asn-29. Residues 49-69 (VILYLMVMIGMFSFIVVAILV) form a helical membrane-spanning segment. Residues 70–123 (STVKSKRREHSQHPYHQYIVEDWQEKYKSQILHLEDSKATIHENMGATGFTVSP) lie on the Cytoplasmic side of the membrane.

It belongs to the potassium channel KCNE family. In terms of assembly, interacts with KCNB1. Associates with KCNH2/ERG1. May associate with KCNQ2 and KCNQ3. Associates with HCN1 and probably HCN2. Heteromultimer with KCNC2. Interacts with KCNC2. Interacts with KCNQ1. Forms a heterooligomer complex with KCNQ1 that targets to the membrane raft and leading to currents with an apparently instantaneous activation, a rapid deactivation process and a linear current-voltage relationship and decreases the amplitude of the outward current.

The protein localises to the cell membrane. Its subcellular location is the apical cell membrane. Ancillary protein that functions as a regulatory subunit of the voltage-gated potassium (Kv) channel complex composed of pore-forming and potassium-conducting alpha subunits and of regulatory beta subunits. KCNE2 beta subunit modulates the gating kinetics and enhances stability of the channel complex. Alters the gating of the delayed rectifier Kv channel containing KCNB1 alpha subunit. Associates with KCNH2/HERG alpha subunit Kv channel to form the rapidly activating component of the delayed rectifying potassium current (IKr) in heart. May associate with KCNQ2 and/or KCNQ3 alpha subunits to modulate the native M-type current. May associate with HCN1 and HCN2 channel subunits to increase potassium current. Forms a heterooligomer complex with KCNQ1/KVLQT1 alpha subunits which leads to currents with an apparently instantaneous activation, a rapid deactivation process and a linear current-voltage relationship and decreases the amplitude of the outward current. KCNQ1-KCNE2 channel associates with Na(+)-coupled myo-inositol symporter in the apical membrane of choroid plexus epithelium and regulates the myo-inositol gradient between blood and cerebrospinal fluid with an impact on neuron excitability. The sequence is that of Potassium voltage-gated channel subfamily E member 2 from Mus musculus (Mouse).